The sequence spans 290 residues: Arylamine N-acetyltransferase 2 (290 aa).

The Acyl-thioester intermediate role is filled by cysteine 68. CoA contacts are provided by threonine 103 and glycine 104. 106–107 serves as a coordination point for substrate; that stretch reads IH. Residues histidine 107 and aspartate 122 contribute to the active site. Residues tyrosine 208, threonine 214, and serine 287 each contribute to the CoA site.

It belongs to the arylamine N-acetyltransferase family.

It is found in the cytoplasm. It catalyses the reaction an arylamine + acetyl-CoA = an N-acetylarylamine + CoA. The enzyme catalyses an N-hydroxyarylamine + acetyl-CoA = an N-acetoxyarylamine + CoA. Catalyzes the N- or O-acetylation of various arylamine and heterocyclic amine substrates, and participates in the detoxification of a plethora of hydrazine and arylamine drugs. The polypeptide is Arylamine N-acetyltransferase 2 (NAT2) (Macaca mulatta (Rhesus macaque)).